Reading from the N-terminus, the 201-residue chain is Small ribosomal subunit protein uS4 (201 aa).

Residues C91 to I157 form the S4 RNA-binding domain.

Belongs to the universal ribosomal protein uS4 family. As to quaternary structure, part of the 30S ribosomal subunit. Contacts protein S5. The interaction surface between S4 and S5 is involved in control of translational fidelity.

Its function is as follows. One of the primary rRNA binding proteins, it binds directly to 16S rRNA where it nucleates assembly of the body of the 30S subunit. With S5 and S12 plays an important role in translational accuracy. In Saccharopolyspora erythraea (strain ATCC 11635 / DSM 40517 / JCM 4748 / NBRC 13426 / NCIMB 8594 / NRRL 2338), this protein is Small ribosomal subunit protein uS4.